A 311-amino-acid chain; its full sequence is Putative F-box protein At3g28280 (311 aa).

Residues 1–43 (MNSLPEDLLAMILVKLPIKIFTTFKIVCTQWESMVDSPYFRDL) enclose the F-box domain.

This Arabidopsis thaliana (Mouse-ear cress) protein is Putative F-box protein At3g28280.